A 292-amino-acid polypeptide reads, in one-letter code: Homoserine kinase (292 aa).

ATP is bound at residue 84–94 (PLSRGLGSSSA).

It belongs to the GHMP kinase family. Homoserine kinase subfamily.

Its subcellular location is the cytoplasm. The catalysed reaction is L-homoserine + ATP = O-phospho-L-homoserine + ADP + H(+). It functions in the pathway amino-acid biosynthesis; L-threonine biosynthesis; L-threonine from L-aspartate: step 4/5. In terms of biological role, catalyzes the ATP-dependent phosphorylation of L-homoserine to L-homoserine phosphate. This chain is Homoserine kinase, found in Campylobacter jejuni subsp. jejuni serotype O:2 (strain ATCC 700819 / NCTC 11168).